The primary structure comprises 1015 residues: SPOC domain-containing protein 1 (1015 aa).

4 disordered regions span residues 73 to 97 (MVSP…SPVL), 118 to 159 (GFSL…EPGG), 213 to 320 (LYPE…PRLE), and 344 to 406 (AASS…MTPL). A compositionally biased stretch (basic and acidic residues) spans 304–320 (SQDHAEGASKKDFPRLE). A compositionally biased stretch (polar residues) spans 373–382 (AHPTPCQSDP). The segment covering 388–397 (AEPHQQRAED) has biased composition (basic and acidic residues). In terms of domain architecture, TFIIS central spans 410–530 (VRSTVVRAMQ…IIEQQQKELY (121 aa)). The tract at residues 643-685 (IQKAPGPAPASSPEVLKVGETPPKEPQDRLQMPAGLKNAPPSP) is disordered. Residues 688 to 791 (WEGSLDMFSI…VQQVKMVLLP (104 aa)) enclose the SPOC domain. 2 disordered regions span residues 858–906 (PEDR…PGWG) and 967–1015 (QSQD…EHEC). Over residues 967–978 (QSQDSLPPSTVV) the composition is skewed to polar residues.

In terms of assembly, interacts with DNMT3A, DNMT3C and DNMT3L. Interacts with C19orf84 homolog. Interacts with SPIN1; promoting recruitment to transposons marked with histone H3 trimethylated at both 'Lys-4' and 'Lys-9' (H3K4me3K9me3).

The protein resides in the nucleus. Its subcellular location is the chromosome. Functionally, protein adapter that acts as an essential executor of PIWIL4-piRNA pathway directed transposon DNA methylation and silencing in the male embryonic germ cells. Recruited to young transposons, which are specifically marked with histone H3 trimethylated at both 'Lys-4' and 'Lys-9' (H3K4me3K9me3), via its association with SPIN1 chromatin reader, and associates with the de novo DNA methylation machinery and repressive chromatin remodeling complexes. Following this, PIWIL4 engages with nascent transposable element transcript to direct piRNA-directed DNA methylation. Not required for piRNA biosynthesis. The protein is SPOC domain-containing protein 1 of Mus musculus (Mouse).